The chain runs to 82 residues: RNA-binding protein Hfq (82 aa).

The Sm domain occupies 9 to 69 (DQLLNTARKD…ISTIIPAKII (61 aa)).

This sequence belongs to the Hfq family. In terms of assembly, homohexamer.

In terms of biological role, RNA chaperone that binds small regulatory RNA (sRNAs) and mRNAs to facilitate mRNA translational regulation in response to envelope stress, environmental stress and changes in metabolite concentrations. Also binds with high specificity to tRNAs. This chain is RNA-binding protein Hfq, found in Leptospira borgpetersenii serovar Hardjo-bovis (strain L550).